The following is a 353-amino-acid chain: MAAELAMGAELPSSPLAIEYVNDFDLMKFEVKKEPPEAERFCHRLPPGSLSSTPLSTPCSSVPSSPSFCAPSPGTGGGGGAGGGGGSSQAGGAPGPPSGGPGAVGGTSGKPALEDLYWMSGYQHHLNPEALNLTPEDAVEALIGSGHHGAHHGAHHPAAAAAYEAFRGPGFAGGGGADDMGAGHHHGAHHAAHHHHAAHHHHHHHHHHGGAGHGGGAGHHVRLEERFSDDQLVSMSVRELNRQLRGFSKEEVIRLKQKRRTLKNRGYAQSCRFKRVQQRHILESEKCQLQSQVEQLKLEVGRLAKERDLYKEKYEKLAGRGGPGSAGGAGFPREPSPPQAGPGGAKGTADFFL.

A Phosphoserine modification is found at Ser-14. Lys-32 participates in a covalent cross-link: Glycyl lysine isopeptide (Lys-Gly) (interchain with G-Cter in SUMO2). Disordered stretches follow at residues 40 to 108 (RFCH…GGTS) and 177 to 219 (ADDM…GAGH). A compositionally biased stretch (low complexity) spans 46-73 (PPGSLSSTPLSTPCSSVPSSPSFCAPSP). Ser-49 carries the post-translational modification Phosphoserine. Residues Thr-53 and Thr-57 each carry the phosphothreonine modification. Ser-61 and Ser-65 each carry phosphoserine. The span at 74 to 93 (GTGGGGGAGGGGGSSQAGGA) shows a compositional bias: gly residues. Over residues 183–210 (GHHHGAHHAAHHHHAAHHHHHHHHHHGG) the composition is skewed to basic residues. Residues 254–279 (RLKQKRRTLKNRGYAQSCRFKRVQQR) are basic motif. The bZIP domain maps to 254–317 (RLKQKRRTLK…DLYKEKYEKL (64 aa)). Residues 282 to 303 (LESEKCQLQSQVEQLKLEVGRL) form a leucine-zipper region. Residues 315-353 (EKLAGRGGPGSAGGAGFPREPSPPQAGPGGAKGTADFFL) are disordered. A compositionally biased stretch (gly residues) spans 319 to 330 (GRGGPGSAGGAG).

Belongs to the bZIP family. Maf subfamily. As to quaternary structure, forms homodimers or heterodimers. Monomers and dimers are able to bind DNA, but the off-rate is faster for monomers. Interacts with NEUROD1 and PDX1. May interact with MAFB, FOS, JUN and PCAF. Post-translationally, ubiquitinated, leading to its degradation by the proteasome. In terms of processing, phosphorylated at tyrosines. Expressed in the islets of Langerhans (at protein level).

It localises to the nucleus. In terms of biological role, transcription factor that activates insulin gene expression. Acts synergistically with NEUROD1/BETA2 and PDX1. Binds the insulin enhancer C1/RIPE3b element. Binds to consensus TRE-type MARE 5'-TGCTGACTCAGCA-3' DNA sequence. The sequence is that of Transcription factor MafA (MAFA) from Homo sapiens (Human).